Reading from the N-terminus, the 760-residue chain is uncharacterized protein (760 aa).

Positions 578–587 are enriched in basic residues; that stretch reads RNRKQSKLRI. The segment at 578 to 604 is disordered; the sequence is RNRKQSKLRISKQQEIQPQKEESVKKE. The span at 595–604 shows a compositional bias: basic and acidic residues; the sequence is PQKEESVKKE.

Its subcellular location is the mitochondrion. This is an uncharacterized protein from Dictyostelium citrinum (Slime mold).